The primary structure comprises 123 residues: Large ribosomal subunit protein uL18 (123 aa).

Belongs to the universal ribosomal protein uL18 family. In terms of assembly, part of the 50S ribosomal subunit; part of the 5S rRNA/L5/L18/L25 subcomplex. Contacts the 5S and 23S rRNAs.

This is one of the proteins that bind and probably mediate the attachment of the 5S RNA into the large ribosomal subunit, where it forms part of the central protuberance. In Wolbachia pipientis wMel, this protein is Large ribosomal subunit protein uL18.